Here is a 387-residue protein sequence, read N- to C-terminus: Ubiquitin-conjugating enzyme E2 25 (387 aa).

Residues Ala-117–Asp-164 are disordered. Over residues Val-120–Asp-131 the composition is skewed to basic and acidic residues. The segment covering Pro-139 to Asp-164 has biased composition (acidic residues). One can recognise a UBC core domain in the interval Thr-214–Tyr-380. The active-site Glycyl thioester intermediate is Cys-315.

The protein belongs to the ubiquitin-conjugating enzyme family. As to expression, in the embryo, expressed in precursor neuron and muscle cells and in other cells such as hypodermal cells. After hatching of L1 larvae and in all subsequent stages, strongest expression in pharyngeal muscle and anal muscle cells. In L4 larvae and adolescent hermaphrodites, also expressed in the vulval muscles. Expression also detected in all four nerve cords and in neurons with weaker levels in all body wall muscles.

The protein resides in the cytoplasm. The protein localises to the nucleus. The catalysed reaction is S-ubiquitinyl-[E1 ubiquitin-activating enzyme]-L-cysteine + [E2 ubiquitin-conjugating enzyme]-L-cysteine = [E1 ubiquitin-activating enzyme]-L-cysteine + S-ubiquitinyl-[E2 ubiquitin-conjugating enzyme]-L-cysteine.. The protein operates within protein modification; protein ubiquitination. In terms of biological role, catalyzes the covalent attachment of ubiquitin to other proteins (Potential). Required for the maintenance of neuromuscular function. This chain is Ubiquitin-conjugating enzyme E2 25, found in Caenorhabditis elegans.